The sequence spans 901 residues: Protein translocase subunit SecA (901 aa).

ATP contacts are provided by residues Gln87, 105–109 (GEGKT), and Asp512. 4 residues coordinate Zn(2+): Cys885, Cys887, Cys896, and His897.

Belongs to the SecA family. Monomer and homodimer. Part of the essential Sec protein translocation apparatus which comprises SecA, SecYEG and auxiliary proteins SecDF-YajC and YidC. It depends on Zn(2+) as a cofactor.

The protein resides in the cell inner membrane. It localises to the cytoplasm. It catalyses the reaction ATP + H2O + cellular proteinSide 1 = ADP + phosphate + cellular proteinSide 2.. In terms of biological role, part of the Sec protein translocase complex. Interacts with the SecYEG preprotein conducting channel. Has a central role in coupling the hydrolysis of ATP to the transfer of proteins into and across the cell membrane, serving both as a receptor for the preprotein-SecB complex and as an ATP-driven molecular motor driving the stepwise translocation of polypeptide chains across the membrane. The protein is Protein translocase subunit SecA of Salmonella schwarzengrund (strain CVM19633).